The following is a 482-amino-acid chain: F-box/LRR-repeat protein At3g58930 (482 aa).

In terms of domain architecture, F-box spans M1–D47. LRR repeat units follow at residues S122–N150, S175–S200, G222–D248, I313–S344, and E345–G370.

This Arabidopsis thaliana (Mouse-ear cress) protein is F-box/LRR-repeat protein At3g58930.